The following is a 494-amino-acid chain: Histidine--tRNA ligase (494 aa).

Belongs to the class-II aminoacyl-tRNA synthetase family. In terms of assembly, homodimer.

The protein resides in the cytoplasm. The enzyme catalyses tRNA(His) + L-histidine + ATP = L-histidyl-tRNA(His) + AMP + diphosphate + H(+). The polypeptide is Histidine--tRNA ligase (Cereibacter sphaeroides (strain ATCC 17023 / DSM 158 / JCM 6121 / CCUG 31486 / LMG 2827 / NBRC 12203 / NCIMB 8253 / ATH 2.4.1.) (Rhodobacter sphaeroides)).